The following is a 153-amino-acid chain: NAD(P)H-quinone oxidoreductase subunit N (153 aa).

The protein belongs to the complex I NdhN subunit family. As to quaternary structure, NDH-1 can be composed of about 15 different subunits; different subcomplexes with different compositions have been identified which probably have different functions.

Its subcellular location is the cellular thylakoid membrane. It catalyses the reaction a plastoquinone + NADH + (n+1) H(+)(in) = a plastoquinol + NAD(+) + n H(+)(out). It carries out the reaction a plastoquinone + NADPH + (n+1) H(+)(in) = a plastoquinol + NADP(+) + n H(+)(out). NDH-1 shuttles electrons from an unknown electron donor, via FMN and iron-sulfur (Fe-S) centers, to quinones in the respiratory and/or the photosynthetic chain. The immediate electron acceptor for the enzyme in this species is believed to be plastoquinone. Couples the redox reaction to proton translocation, and thus conserves the redox energy in a proton gradient. Cyanobacterial NDH-1 also plays a role in inorganic carbon-concentration. This is NAD(P)H-quinone oxidoreductase subunit N from Prochlorococcus marinus (strain MIT 9303).